A 163-amino-acid chain; its full sequence is Transcriptional repressor NrdR (163 aa).

A zinc finger lies at 3–34 (CVQCGHLEDKVIDSRMSKDGTTIRRRRVCLRC). The region spanning 49 to 139 (LRVVKRDNLR…VYRQFSNVEE (91 aa)) is the ATP-cone domain.

Belongs to the NrdR family. Zn(2+) serves as cofactor.

Negatively regulates transcription of bacterial ribonucleotide reductase nrd genes and operons by binding to NrdR-boxes. The sequence is that of Transcriptional repressor NrdR from Akkermansia muciniphila (strain ATCC BAA-835 / DSM 22959 / JCM 33894 / BCRC 81048 / CCUG 64013 / CIP 107961 / Muc).